The sequence spans 319 residues: Chromoplast-specific carotenoid-associated protein C2, chromoplastic (319 aa).

A chromoplast-targeting transit peptide spans 1-55 (MTSIAFCNAFTVNPFLAAARRSPPPLTPLTSVALSPARKPRILAIFHPRTFPSFR).

The protein belongs to the PAP/fibrillin family.

It is found in the plastid. The protein resides in the chromoplast. May be involved in carotenoid sequestration within chromoplasts. The sequence is that of Chromoplast-specific carotenoid-associated protein C2, chromoplastic (CHRC2) from Oncidium hybrid cultivar (Orchid).